A 334-amino-acid chain; its full sequence is Probable aminoacyl tRNA synthase complex-interacting multifunctional protein 2 (334 aa).

A GST C-terminal domain is found at 280–327; that stretch reads LDKRLQKQQYFGGSQMSVADVGVYSSLIRMPAVTEKDLTPALVAWRKR.

Component of the aminoacyl-tRNA synthase complex which is comprised of a bifunctional glutamyl-prolyl-tRNA synthase, the monospecific isoleucyl, leucyl, glutaminyl, methionyl, lysyl, arginyl and aspartyl-tRNA synthases, and three auxiliary proteins.

The protein resides in the cytoplasm. Its subcellular location is the cytosol. It is found in the nucleus. Required for assembly and stability of the aminoacyl-tRNA synthase complex. The sequence is that of Probable aminoacyl tRNA synthase complex-interacting multifunctional protein 2 from Drosophila melanogaster (Fruit fly).